The following is a 290-amino-acid chain: Serine protease 27 (290 aa).

An N-terminal signal peptide occupies residues 1 to 22; it reads MRRPAAVPLLLLLCFGSQRAKA. The propeptide at 23–34 is activation peptide; sequence ATACGRPRMLNR. The region spanning 35–277 is the Peptidase S1 domain; sequence MVGGQDTQEG…HHNWIHRIIP (243 aa). Asn55 carries an N-linked (GlcNAc...) asparagine glycan. Cys60 and Cys76 are disulfide-bonded. The Charge relay system role is filled by His75. N-linked (GlcNAc...) asparagine glycosylation is present at Asn79. The Charge relay system role is filled by Asp124. Intrachain disulfides connect Cys158-Cys235, Cys191-Cys214, and Cys225-Cys253. Ser229 (charge relay system) is an active-site residue.

Belongs to the peptidase S1 family. In terms of processing, N-glycosylated. In terms of tissue distribution, expressed predominantly in the pancreas.

It is found in the secreted. The protein is Serine protease 27 (PRSS27) of Homo sapiens (Human).